Reading from the N-terminus, the 877-residue chain is Alanine--tRNA ligase (877 aa).

Positions 561, 565, 669, and 673 each coordinate Zn(2+).

Belongs to the class-II aminoacyl-tRNA synthetase family. It depends on Zn(2+) as a cofactor.

The protein resides in the cytoplasm. The catalysed reaction is tRNA(Ala) + L-alanine + ATP = L-alanyl-tRNA(Ala) + AMP + diphosphate. In terms of biological role, catalyzes the attachment of alanine to tRNA(Ala) in a two-step reaction: alanine is first activated by ATP to form Ala-AMP and then transferred to the acceptor end of tRNA(Ala). Also edits incorrectly charged Ser-tRNA(Ala) and Gly-tRNA(Ala) via its editing domain. The polypeptide is Alanine--tRNA ligase (Endomicrobium trichonymphae).